A 139-amino-acid chain; its full sequence is Large ribosomal subunit protein eL34 (139 aa).

The disordered stretch occupies residues 113–139 (VSKPPKIAKAPAAAAAAKPAKTATKSK).

Belongs to the eukaryotic ribosomal protein eL34 family.

The chain is Large ribosomal subunit protein eL34 (RpL34) from Ochlerotatus triseriatus (Eastern treehole mosquito).